Here is a 553-residue protein sequence, read N- to C-terminus: Methyl-coenzyme M reductase II subunit alpha (553 aa).

Q150 contacts coenzyme F430. Residues R228, 259–260 (KH), and R273 each bind coenzyme B. The residue at position 260 (H260) is a Pros-methylhistidine. Residue R274 is modified to 5-methylarginine. Y335 contributes to the coenzyme M binding site. Q402 carries the 2-methylglutamine modification. Y446 contacts coenzyme M. At G447 the chain carries 1-thioglycine. At D452 the chain carries (Z)-2,3-didehydroaspartate. C454 bears the S-methylcysteine mark.

Belongs to the methyl-coenzyme M reductase alpha subunit family. In terms of assembly, MCR is a hexamer of two alpha, two beta, and two gamma chains, forming a dimer of heterotrimers. Coenzyme F430 serves as cofactor. The alpha subunit contains six modified amino acids near the active site region. Is methylated on His-260, Arg-274, Gln-402 and Cys-454, probably by the action of specific S-adenosylmethionine-dependent methyltransferases. Also contains a thioglycine at position 447, forming a thiopeptide bond. Contains a didehydroaspartate residue at position 452. The methylation on C5 of Arg-274 is a post-translational methylation not essential in vivo, but which plays a role for the stability and structural integrity of MCR.

It carries out the reaction coenzyme B + methyl-coenzyme M = methane + coenzyme M-coenzyme B heterodisulfide. Its pathway is one-carbon metabolism; methyl-coenzyme M reduction; methane from methyl-coenzyme M: step 1/1. Component of the methyl-coenzyme M reductase (MCR) I that catalyzes the reductive cleavage of methyl-coenzyme M (CoM-S-CH3 or 2-(methylthio)ethanesulfonate) using coenzyme B (CoB or 7-mercaptoheptanoylthreonine phosphate) as reductant which results in the production of methane and the mixed heterodisulfide of CoB and CoM (CoM-S-S-CoB). This is the final step in methanogenesis. The sequence is that of Methyl-coenzyme M reductase II subunit alpha (mrtA) from Methanothermobacter marburgensis (strain ATCC BAA-927 / DSM 2133 / JCM 14651 / NBRC 100331 / OCM 82 / Marburg) (Methanobacterium thermoautotrophicum).